The chain runs to 377 residues: 1,3,6,8-tetrahydroxynaphthalene synthase (377 aa).

The active site involves Cys164.

This sequence belongs to the thiolase-like superfamily. Chalcone/stilbene synthases family. Homodimer.

The catalysed reaction is 5 malonyl-CoA + 5 H(+) = naphthalene-1,3,6,8-tetrol + 5 CO2 + 5 CoA + H2O. Its pathway is pigment biosynthesis; melanin biosynthesis. Its function is as follows. Involved in the biosynthesis of melanin but also various secondary metabolites containing a naphthoquinone ring. Catalyzes the iterative condensation of five CoA-linked malonyl units to form a pentaketide intermediate. THNS subsequently catalyzes the dual intramolecular Claisen and aldol condensations of this linear intermediate to produce the fused ring of 1,3,6,8-tetrahydroxynaphthalene (THN). The polypeptide is 1,3,6,8-tetrahydroxynaphthalene synthase (Streptomyces peucetius subsp. caesius).